Reading from the N-terminus, the 213-residue chain is Cytochrome c biogenesis ATP-binding export protein CcmA (213 aa).

Positions 11–213 (LTARNLECIR…TVTVHHLVLS (203 aa)) constitute an ABC transporter domain. 43 to 50 (GPNGSGKT) provides a ligand contact to ATP.

Belongs to the ABC transporter superfamily. CcmA exporter (TC 3.A.1.107) family. As to quaternary structure, the complex is composed of two ATP-binding proteins (CcmA) and two transmembrane proteins (CcmB).

Its subcellular location is the cell inner membrane. It carries out the reaction heme b(in) + ATP + H2O = heme b(out) + ADP + phosphate + H(+). Its function is as follows. Part of the ABC transporter complex CcmAB involved in the biogenesis of c-type cytochromes; once thought to export heme, this seems not to be the case, but its exact role is uncertain. Responsible for energy coupling to the transport system. The protein is Cytochrome c biogenesis ATP-binding export protein CcmA of Nitrosomonas europaea (strain ATCC 19718 / CIP 103999 / KCTC 2705 / NBRC 14298).